Reading from the N-terminus, the 201-residue chain is NAD(P)H dehydrogenase (quinone) (201 aa).

Residues 4 to 192 (VLVLYYSSYG…TIARFQGQHI (189 aa)) enclose the Flavodoxin-like domain. Residues 10–15 (SSYGHV) and 80–82 (TRF) contribute to the FMN site. Y12 is an NAD(+) binding site. W100 contributes to the substrate binding site. FMN-binding positions include 115–121 (STASQHG) and H136.

It belongs to the WrbA family. FMN is required as a cofactor.

The catalysed reaction is a quinone + NADH + H(+) = a quinol + NAD(+). It carries out the reaction a quinone + NADPH + H(+) = a quinol + NADP(+). The sequence is that of NAD(P)H dehydrogenase (quinone) from Chromohalobacter salexigens (strain ATCC BAA-138 / DSM 3043 / CIP 106854 / NCIMB 13768 / 1H11).